A 214-amino-acid chain; its full sequence is Phosphatidylserine decarboxylase proenzyme (214 aa).

Residue Ser182 is the Schiff-base intermediate with substrate; via pyruvic acid of the active site. Ser182 carries the pyruvic acid (Ser); by autocatalysis modification.

This sequence belongs to the phosphatidylserine decarboxylase family. PSD-A subfamily. As to quaternary structure, heterodimer of a large membrane-associated beta subunit and a small pyruvoyl-containing alpha subunit. It depends on pyruvate as a cofactor. Is synthesized initially as an inactive proenzyme. Formation of the active enzyme involves a self-maturation process in which the active site pyruvoyl group is generated from an internal serine residue via an autocatalytic post-translational modification. Two non-identical subunits are generated from the proenzyme in this reaction, and the pyruvate is formed at the N-terminus of the alpha chain, which is derived from the carboxyl end of the proenzyme. The post-translation cleavage follows an unusual pathway, termed non-hydrolytic serinolysis, in which the side chain hydroxyl group of the serine supplies its oxygen atom to form the C-terminus of the beta chain, while the remainder of the serine residue undergoes an oxidative deamination to produce ammonia and the pyruvoyl prosthetic group on the alpha chain.

The protein resides in the cell membrane. It carries out the reaction a 1,2-diacyl-sn-glycero-3-phospho-L-serine + H(+) = a 1,2-diacyl-sn-glycero-3-phosphoethanolamine + CO2. It functions in the pathway phospholipid metabolism; phosphatidylethanolamine biosynthesis; phosphatidylethanolamine from CDP-diacylglycerol: step 2/2. Catalyzes the formation of phosphatidylethanolamine (PtdEtn) from phosphatidylserine (PtdSer). In Burkholderia lata (strain ATCC 17760 / DSM 23089 / LMG 22485 / NCIMB 9086 / R18194 / 383), this protein is Phosphatidylserine decarboxylase proenzyme.